The following is a 479-amino-acid chain: Glycogen synthase (479 aa).

Position 15 (Lys15) interacts with ADP-alpha-D-glucose.

It belongs to the glycosyltransferase 1 family. Bacterial/plant glycogen synthase subfamily.

It carries out the reaction [(1-&gt;4)-alpha-D-glucosyl](n) + ADP-alpha-D-glucose = [(1-&gt;4)-alpha-D-glucosyl](n+1) + ADP + H(+). Its pathway is glycan biosynthesis; glycogen biosynthesis. In terms of biological role, synthesizes alpha-1,4-glucan chains using ADP-glucose. This chain is Glycogen synthase, found in Clostridium beijerinckii (strain ATCC 51743 / NCIMB 8052) (Clostridium acetobutylicum).